The primary structure comprises 376 residues: Cobalt-precorrin-5B C(1)-methyltransferase (376 aa).

This sequence belongs to the CbiD family.

It carries out the reaction Co-precorrin-5B + S-adenosyl-L-methionine = Co-precorrin-6A + S-adenosyl-L-homocysteine. The protein operates within cofactor biosynthesis; adenosylcobalamin biosynthesis; cob(II)yrinate a,c-diamide from sirohydrochlorin (anaerobic route): step 6/10. In terms of biological role, catalyzes the methylation of C-1 in cobalt-precorrin-5B to form cobalt-precorrin-6A. This is Cobalt-precorrin-5B C(1)-methyltransferase from Bradyrhizobium sp. (strain BTAi1 / ATCC BAA-1182).